A 1005-amino-acid chain; its full sequence is Espin-like protein (1005 aa).

10 ANK repeats span residues 1–31 (MEAQ…RPDI), 35–64 (LGAG…LPGN), 69–99 (NGAT…GLQD), 103–132 (SGVS…AATL), 136–166 (EGAL…GVNQ), 170–200 (SGAS…DVRL), 204–234 (DGMS…GLTA), 238–267 (EGAT…PIMR), 270–299 (WGGT…DPFL), and 303–332 (DGYT…PVRV). Disordered regions lie at residues 355–383 (EERR…VPRE) and 458–480 (ADHP…AAEQ). Residues 458-469 (ADHPPEDQDQSQ) are compositionally biased toward basic and acidic residues. A coiled-coil region spans residues 502-539 (EDDLVYLEKQINDLQLRRRCQEYESELGRLAAQLQALL). Disordered regions lie at residues 611-643 (LAQG…QREI), 692-729 (PRGD…GPGL), 764-794 (LEAQ…PRLG), and 951-975 (PHAS…SQGS).

Interacts with MYO3A (via C-terminus). Interacts with MYO3B (via C-terminus). As to expression, expressed in inner ear hair cells. Expressed in utricle hair bundles (at protein level). Expressed in choclea (at protein level).

The protein localises to the cell projection. It localises to the stereocilium. Binds to but does not cross-link actin. Required for the formation and maintenance of inner ear hair cell stereocilia and staircase formation. Essential for normal hearing. The protein is Espin-like protein (Espnl) of Mus musculus (Mouse).